A 217-amino-acid polypeptide reads, in one-letter code: Large ribosomal subunit protein uL3 (217 aa).

Gln154 is subject to N5-methylglutamine.

The protein belongs to the universal ribosomal protein uL3 family. In terms of assembly, part of the 50S ribosomal subunit. Forms a cluster with proteins L14 and L19. Methylated by PrmB.

One of the primary rRNA binding proteins, it binds directly near the 3'-end of the 23S rRNA, where it nucleates assembly of the 50S subunit. In Burkholderia ambifaria (strain ATCC BAA-244 / DSM 16087 / CCUG 44356 / LMG 19182 / AMMD) (Burkholderia cepacia (strain AMMD)), this protein is Large ribosomal subunit protein uL3.